The sequence spans 190 residues: Probable nicotinate-nucleotide adenylyltransferase (190 aa).

It belongs to the NadD family.

The enzyme catalyses nicotinate beta-D-ribonucleotide + ATP + H(+) = deamido-NAD(+) + diphosphate. It functions in the pathway cofactor biosynthesis; NAD(+) biosynthesis; deamido-NAD(+) from nicotinate D-ribonucleotide: step 1/1. Functionally, catalyzes the reversible adenylation of nicotinate mononucleotide (NaMN) to nicotinic acid adenine dinucleotide (NaAD). The protein is Probable nicotinate-nucleotide adenylyltransferase of Frankia alni (strain DSM 45986 / CECT 9034 / ACN14a).